A 299-amino-acid chain; its full sequence is Pyridoxal 5'-phosphate synthase subunit PdxS (299 aa).

D-ribose 5-phosphate is bound at residue D24. The active-site Schiff-base intermediate with D-ribose 5-phosphate is K81. Residue G153 participates in D-ribose 5-phosphate binding. Residue R165 coordinates D-glyceraldehyde 3-phosphate. D-ribose 5-phosphate is bound by residues G219 and 240-241 (GS).

This sequence belongs to the PdxS/SNZ family. In terms of assembly, in the presence of PdxT, forms a dodecamer of heterodimers.

It carries out the reaction aldehydo-D-ribose 5-phosphate + D-glyceraldehyde 3-phosphate + L-glutamine = pyridoxal 5'-phosphate + L-glutamate + phosphate + 3 H2O + H(+). It participates in cofactor biosynthesis; pyridoxal 5'-phosphate biosynthesis. Catalyzes the formation of pyridoxal 5'-phosphate from ribose 5-phosphate (RBP), glyceraldehyde 3-phosphate (G3P) and ammonia. The ammonia is provided by the PdxT subunit. Can also use ribulose 5-phosphate and dihydroxyacetone phosphate as substrates, resulting from enzyme-catalyzed isomerization of RBP and G3P, respectively. The sequence is that of Pyridoxal 5'-phosphate synthase subunit PdxS from Methanococcus maripaludis (strain C6 / ATCC BAA-1332).